The sequence spans 137 residues: Small ribosomal subunit protein uS9 (137 aa).

The disordered stretch occupies residues 105–137 (LKTEGYLKRDPRAVERKKYGLRKARKAPQYSKR). A compositionally biased stretch (basic and acidic residues) spans 109–122 (GYLKRDPRAVERKK). Residues 123-137 (YGLRKARKAPQYSKR) are compositionally biased toward basic residues.

Belongs to the universal ribosomal protein uS9 family.

This Synechococcus sp. (strain JA-3-3Ab) (Cyanobacteria bacterium Yellowstone A-Prime) protein is Small ribosomal subunit protein uS9.